Consider the following 193-residue polypeptide: Xanthine phosphoribosyltransferase (193 aa).

Leu-20 and Thr-27 together coordinate xanthine. 128-132 (ANGQA) is a 5-phospho-alpha-D-ribose 1-diphosphate binding site. Lys-156 contributes to the xanthine binding site.

The protein belongs to the purine/pyrimidine phosphoribosyltransferase family. Xpt subfamily. In terms of assembly, homodimer.

The protein resides in the cytoplasm. The catalysed reaction is XMP + diphosphate = xanthine + 5-phospho-alpha-D-ribose 1-diphosphate. The protein operates within purine metabolism; XMP biosynthesis via salvage pathway; XMP from xanthine: step 1/1. Functionally, converts the preformed base xanthine, a product of nucleic acid breakdown, to xanthosine 5'-monophosphate (XMP), so it can be reused for RNA or DNA synthesis. In Streptococcus pyogenes serotype M3 (strain ATCC BAA-595 / MGAS315), this protein is Xanthine phosphoribosyltransferase.